A 293-amino-acid polypeptide reads, in one-letter code: Ribosomal protein L11 methyltransferase (293 aa).

Threonine 145, glycine 166, aspartate 188, and asparagine 230 together coordinate S-adenosyl-L-methionine.

This sequence belongs to the methyltransferase superfamily. PrmA family.

It is found in the cytoplasm. It catalyses the reaction L-lysyl-[protein] + 3 S-adenosyl-L-methionine = N(6),N(6),N(6)-trimethyl-L-lysyl-[protein] + 3 S-adenosyl-L-homocysteine + 3 H(+). Methylates ribosomal protein L11. In Shewanella piezotolerans (strain WP3 / JCM 13877), this protein is Ribosomal protein L11 methyltransferase.